The sequence spans 363 residues: UDP-N-acetylglucosamine--N-acetylmuramyl-(pentapeptide) pyrophosphoryl-undecaprenol N-acetylglucosamine transferase (363 aa).

Residues 14–16 (TGG), N122, R163, S190, and Q285 each bind UDP-N-acetyl-alpha-D-glucosamine.

It belongs to the glycosyltransferase 28 family. MurG subfamily.

It localises to the cell inner membrane. The catalysed reaction is di-trans,octa-cis-undecaprenyl diphospho-N-acetyl-alpha-D-muramoyl-L-alanyl-D-glutamyl-meso-2,6-diaminopimeloyl-D-alanyl-D-alanine + UDP-N-acetyl-alpha-D-glucosamine = di-trans,octa-cis-undecaprenyl diphospho-[N-acetyl-alpha-D-glucosaminyl-(1-&gt;4)]-N-acetyl-alpha-D-muramoyl-L-alanyl-D-glutamyl-meso-2,6-diaminopimeloyl-D-alanyl-D-alanine + UDP + H(+). It functions in the pathway cell wall biogenesis; peptidoglycan biosynthesis. Functionally, cell wall formation. Catalyzes the transfer of a GlcNAc subunit on undecaprenyl-pyrophosphoryl-MurNAc-pentapeptide (lipid intermediate I) to form undecaprenyl-pyrophosphoryl-MurNAc-(pentapeptide)GlcNAc (lipid intermediate II). This is UDP-N-acetylglucosamine--N-acetylmuramyl-(pentapeptide) pyrophosphoryl-undecaprenol N-acetylglucosamine transferase from Prochlorococcus marinus (strain MIT 9312).